The primary structure comprises 542 residues: Plasminogen-binding protein PgbB (542 aa).

The tract at residues 399–542 is disordered; sequence KSASKKSQKG…RRKALEMNKK (144 aa). 2 stretches are compositionally biased toward basic and acidic residues: residues 418–435 and 447–456; these read QERH…ENKV and VKTRRPEPIR. Over residues 457 to 467 the composition is skewed to polar residues; sequence DQNNATQQGET. The span at 481 to 542 shows a compositional bias: basic and acidic residues; sequence NAAKKEVPKP…RRKALEMNKK (62 aa).

The protein localises to the cell surface. Its function is as follows. Binds plasminogen, specifically, and in a concentration and lysine-dependent manner. Plasminogen is the precursor of plasmin, a serine protease that cleaves fibrin, fibronectin, laminin and vitronectin. Acquisition of plasminogen/plasmin could enable H.pylori to degrade host components. The protein is Plasminogen-binding protein PgbB (pgbB) of Helicobacter pylori (strain ATCC 700392 / 26695) (Campylobacter pylori).